The chain runs to 343 residues: Fructose-1,6-bisphosphatase, cytosolic (343 aa).

Residues Glu71, Glu100, Asp121, Leu123, and Asp124 each coordinate Mg(2+). Substrate-binding positions include Asp124–Ser127, Asn215, Tyr247, Tyr267, and Lys277. Glu283 is a binding site for Mg(2+).

Belongs to the FBPase class 1 family. Requires Mg(2+) as cofactor.

The protein localises to the cytoplasm. It carries out the reaction beta-D-fructose 1,6-bisphosphate + H2O = beta-D-fructose 6-phosphate + phosphate. The protein is Fructose-1,6-bisphosphatase, cytosolic (CFBP) of Saccharum hybrid (Sugarcane).